Consider the following 432-residue polypeptide: MNTVDIGQKYKRIVEYLWDPEPKNDDDIIEPVWCLGKEYKTSIPRDSEGAEAPESCNMPGMPFLSPMNQMSLSSRDTQAALSKPATPPHQLGIQRSKSREWPTSFLDDFESKFWFTYRSNFPAIPKSRDPDTPLALTLSVRLRSQFLDTHGFTADTGWGCMIRSGQSLLANALSILNLGRDWRRGSKIKEECELLSLFADNPQAPFSIHRFVDYGASACGKHPGEWFGPSATARCIEALSNECKHTDLNVYVMSDGSDVHEDQFRQIAGPDGIRPTLILLGVRLGIESVTPVYWEALRAIIRYPQSVGIAGGRPSSSLYFIGVQGPYFFYLDPHHTRPAVSWNPDSTLSPENLDTYHTRRLRRLHIREMDPSMLIGFLIKDDDDWKDWKRRLRSVTGNPIIHIFDLERPNFGRHLEREEAVDEVEALDDDSN.

Residues 74–97 form a disordered region; sequence SRDTQAALSKPATPPHQLGIQRSK. Residue Cys-160 is the Nucleophile of the active site. Active-site residues include Asp-332 and His-334.

Belongs to the peptidase C54 family.

It is found in the cytoplasm. Its subcellular location is the nucleus. It localises to the preautophagosomal structure. The enzyme catalyses [protein]-C-terminal L-amino acid-glycyl-phosphatidylethanolamide + H2O = [protein]-C-terminal L-amino acid-glycine + a 1,2-diacyl-sn-glycero-3-phosphoethanolamine. Cysteine protease that plays a key role in cytoplasm to vacuole transport (Cvt) and autophagy by mediating both proteolytic activation and delipidation of ATG8. Required for selective autophagic degradation of the nucleus (nucleophagy) as well as for mitophagy which contributes to regulate mitochondrial quantity and quality by eliminating the mitochondria to a basal level to fulfill cellular energy requirements and preventing excess ROS production. The protease activity is required for proteolytic activation of ATG8: cleaves the C-terminal amino acid of ATG8 to reveal a C-terminal glycine. ATG8 ubiquitin-like activity requires the exposure of the glycine at the C-terminus for its conjugation to phosphatidylethanolamine (PE) and its insertion to membranes, which is necessary for autophagy. The ATG8-PE conjugate mediates tethering between adjacent membranes and stimulates membrane hemifusion, leading to expansion of the autophagosomal membrane during autophagy. In addition to the protease activity, also catalyzes deconjugation of PE-conjugated forms of ATG8 during macroautophagy: ATG8 delipidation is required to release the protein from membranes, which facilitates multiple events during macroautophagy, and especially for efficient autophagosome biogenesis, the assembly of ATG9-containing tubulovesicular clusters into phagophores/autophagosomes, and for the disassembly of PAS-associated ATG components. ATG8 delipidation by ATG4 also recycles ATG8-PE generated on inappropriate membranes to maintain a reservoir of unlipidated ATG8 that is required for autophagosome formation at the PAS. The protein is Probable cysteine protease ATG4 (ATG4) of Coccidioides immitis (strain RS) (Valley fever fungus).